Reading from the N-terminus, the 842-residue chain is Xyloglucanase Xgh74A (842 aa).

The signal sequence occupies residues 1 to 32 (MVKKFTSKIKAAVFAAVVAATAIFGPAISSQA). Catalysis depends on D70, which acts as the Nucleophile. 4 BNR repeats span residues 134–144 (RSTDRGETWEK), 185–196 (WRSTDYGVTWSK), 252–262 (YRSTDGGVTWK), and 358–368 (FRSTDGGATWK). The Proton donor role is filled by D480. BNR repeat units follow at residues 533–541 (FSYDGGRNW), 577–586 (VTTDNGNSWK), 616–626 (YISTDGGLTFT), 660–671 (WRSTDGGYTFEK), and 708–718 (FRSDDAGKTWV). Positions 771–841 (DKGLVGDLNG…LLQAIPELPK (71 aa)) constitute a Dockerin domain.

The protein belongs to the glycosyl hydrolase 74 family.

In terms of biological role, hydrolyzes the glucosidic bonds of unbranched Glc residues in tamarind seed xyloglucan, producing XXXG, XLXG, XXLG and XLLG. Has low activity on carboxymethylcellulose, lichenan,hydroxyethylcellulose and glucuronoxylan, and no activity on xylan, polygalaturonic acid, wheat arabinoxylan, rhamnogalacturan, curdlan, laminarin, galactomannan, galactan, arabinan and pachyman or amorphous cellulose. This Acetivibrio thermocellus (Hungateiclostridium thermocellum) protein is Xyloglucanase Xgh74A.